We begin with the raw amino-acid sequence, 262 residues long: uncharacterized protein (262 aa).

Disordered stretches follow at residues 1 to 30 (MGKK…KKEK) and 232 to 262 (EEEE…DMEE). Composition is skewed to acidic residues over residues 9–21 (NEDG…ETES), 232–245 (EEEE…EETD), and 253–262 (EEDEDEDMEE).

This is an uncharacterized protein from Caenorhabditis elegans.